The primary structure comprises 389 residues: Na(+)/H(+) antiporter NhaA 1 (389 aa).

Transmembrane regions (helical) follow at residues 14–34 (AGGILLVIAAAIAMVIANSPL), 47–67 (FGMSVSHWINDGLMAIFFLLI), 87–107 (IFPAIAAVGGMLAPALIYVAF), 117–137 (GWAIPAATDIAFALGIMALLG), 146–166 (VFLLALAIIDDLGVVVIIALF), 171–191 (LSTLALTVGFAMTGVLFMLNA), 197–217 (LIWYIVVGFILWVAVLKSGVH), 252–272 (VAFAILPVFAFANAGISLEGV), 280–300 (MLPLGIALGLLVGKPLGIFTF), 321–341 (IFAVSVLCGIGFTMSIFISSL), and 356–376 (LGILMGSTTAAVLGYFLLHVS).

Belongs to the NhaA Na(+)/H(+) (TC 2.A.33) antiporter family.

The protein localises to the cell inner membrane. The catalysed reaction is Na(+)(in) + 2 H(+)(out) = Na(+)(out) + 2 H(+)(in). In terms of biological role, na(+)/H(+) antiporter that extrudes sodium in exchange for external protons. The polypeptide is Na(+)/H(+) antiporter NhaA 1 (Vibrio vulnificus (strain CMCP6)).